A 135-amino-acid polypeptide reads, in one-letter code: Crustacean hyperglycemic hormones A* (135 aa).

Positions 1–26 are cleaved as a signal peptide; it reads MVSFRTMWSVVVVVVVASLASSGVQG. Position 62 is a pyrrolidone carboxylic acid (Gln-62). 3 disulfide bridges follow: Cys-68-Cys-104, Cys-84-Cys-100, and Cys-87-Cys-113. Val-133 carries the post-translational modification Valine amide.

The protein belongs to the arthropod CHH/MIH/GIH/VIH hormone family. As to expression, produced by the medulla terminalis X-organ in the eyestalks and transported to the sinus gland where they are stored and released.

It is found in the secreted. In terms of biological role, hormone found in the sinus gland of isopods and decapods which controls the blood sugar level. Has a secretagogue action over the amylase released from the midgut gland. May act as a stress hormone and may be involved in the control of molting and reproduction. The chain is Crustacean hyperglycemic hormones A* (CHHA*) from Faxonius limosus (Spinycheek crayfish).